Consider the following 1733-residue polypeptide: Gag-Pol polyprotein (1733 aa).

Residue glycine 2 is the site of N-myristoyl glycine; by host attachment. The short motif at 109 to 112 (PTAP) is the PTAP/PSAP motif element. An LYPX(n)L motif motif is present at residues 128–132 (LYPAL). Disordered regions lie at residues 139–218 (KPPK…LRMG), 449–497 (KEER…RPQL), and 511–549 (WAKDCPKKPRGPRGPRPQTSLLTLGDXGGQGQEPPPEPR). A PPXY motif motif is present at residues 161–164 (PPPY). Position 190 is a phosphoserine; by host (serine 190). Residues 436–476 (EEREERIRREIEEKEERRRAEDEQRERERDRRRHREMSKLL) are a coiled coil. Composition is skewed to basic and acidic residues over residues 449-464 (KEERRRAEDEQRERER) and 484-497 (RQDRQGGERRRPQL). The segment at 500–517 (DQCAYCKEKGHWAKDCPK) adopts a CCHC-type zinc-finger fold. Positions 526–535 (RPQTSLLTLG) are enriched in low complexity. The Peptidase A2 domain occupies 559 to 629 (VTFLVDTGAQ…CPYPLLGRDL (71 aa)). The active-site Protease; shared with dimeric partner is the aspartate 564. RNA-binding residues include tyrosine 721, aspartate 771, arginine 773, and proline 787. A Reverse transcriptase domain is found at 739–930 (LDQGILVPCQ…KQVKYLGYLL (192 aa)). Aspartate 807 provides a ligand contact to Mg(2+). 2 residues coordinate RNA: asparagine 851 and proline 853. Mg(2+)-binding residues include aspartate 881 and aspartate 882. DNA-binding residues include arginine 941, arginine 955, arginine 958, and phenylalanine 966. RNA is bound by residues lysine 1054 and lysine 1055. Position 1063 (tryptophan 1063) interacts with DNA. Lysine 1082 lines the RNA pocket. Residue arginine 1113 coordinates DNA. Residues 1172–1318 (PDADYTWYTD…ADQAAREAAM (147 aa)) enclose the RNase H type-1 domain. Aspartate 1181 serves as a coordination point for Mg(2+). Residues serine 1184 and leucine 1186 each coordinate RNA. DNA is bound by residues glutamine 1187, serine 1214, and glutamine 1216. Residues glutamate 1219 and aspartate 1240 each coordinate Mg(2+). The RNA site is built by arginine 1242 and arginine 1266. Residues aspartate 1310, aspartate 1453, and aspartate 1512 each contribute to the Mg(2+) site. Residues 1442-1600 (RGHRPGTHWE…TPYEILYGAP (159 aa)) form the Integrase catalytic domain.

In terms of assembly, homohexamer, that further associates as homomultimer. The virus core is composed of a lattice formed from hexagonal rings, each containing six capsid monomers. The protease is a homodimer, whose active site consists of two apposed aspartic acid residues. The reverse transcriptase is a monomer. As to quaternary structure, interacts (via PPXY motif) with host NEDD4. Interacts (via PSAP motif) with host TSG101. Interacts (via LYPX(n)L motif) with host PDCD6IP. The reverse transcriptase is a monomer (Potential). Interacts (via RNase domains) with host release factor ETF1; this interaction is essential for translational readthrough of amber codon between viral gag and pol genes, as well as for viral replication. In terms of assembly, homodimer. Mg(2+) is required as a cofactor. It depends on Mn(2+) as a cofactor. Post-translationally, specific enzymatic cleavages by the viral protease yield mature proteins. The protease is released by autocatalytic cleavage. The polyprotein is cleaved during and after budding, this process is termed maturation. In terms of processing, sumoylated; which is required for virus replication. Phosphorylated on serine residues.

It is found in the host cell membrane. The protein resides in the virion. The enzyme catalyses DNA(n) + a 2'-deoxyribonucleoside 5'-triphosphate = DNA(n+1) + diphosphate. It carries out the reaction Endonucleolytic cleavage to 5'-phosphomonoester.. In terms of biological role, plays a role in budding and is processed by the viral protease during virion maturation outside the cell. During budding, it recruits, in a PPXY-dependent or independent manner, Nedd4-like ubiquitin ligases that conjugate ubiquitin molecules to Gag, or to Gag binding host factors. Interaction with HECT ubiquitin ligases probably link the viral protein to the host ESCRT pathway and facilitate release. Targets Gag and gag-pol polyproteins to the plasma membrane via a multipartite membrane binding signal, that includes its myristoylated N-terminus. Also mediates nuclear localization of the pre-integration complex. Functionally, forms the spherical core of the virion that encapsulates the genomic RNA-nucleocapsid complex. Its function is as follows. Involved in the packaging and encapsidation of two copies of the genome. Binds with high affinity to conserved UCUG elements within the packaging signal, located near the 5'-end of the genome. This binding is dependent on genome dimerization. Acts as a nucleic acid chaperone which is involved in rearrangement of nucleic acid secondary structures during gRNA retrotranscription. In terms of biological role, the aspartyl protease mediates proteolytic cleavages of Gag and Gag-Pol polyproteins during or shortly after the release of the virion from the plasma membrane. Cleavages take place as an ordered, step-wise cascade to yield mature proteins. This process is called maturation. Displays maximal activity during the budding process just prior to particle release from the cell. RT is a multifunctional enzyme that converts the viral dimeric RNA genome into dsDNA in the cytoplasm, shortly after virus entry into the cell. This enzyme displays a DNA polymerase activity that can copy either DNA or RNA templates, and a ribonuclease H (RNase H) activity that cleaves the RNA strand of RNA-DNA heteroduplexes in a partially processive 3' to 5' endonucleasic mode. Conversion of viral genomic RNA into dsDNA requires many steps. A tRNA binds to the primer-binding site (PBS) situated at the 5' end of the viral RNA. RT uses the 3' end of the tRNA primer to perform a short round of RNA-dependent minus-strand DNA synthesis. The reading proceeds through the U5 region and ends after the repeated (R) region which is present at both ends of viral RNA. The portion of the RNA-DNA heteroduplex is digested by the RNase H, resulting in a ssDNA product attached to the tRNA primer. This ssDNA/tRNA hybridizes with the identical R region situated at the 3' end of viral RNA. This template exchange, known as minus-strand DNA strong stop transfer, can be either intra- or intermolecular. RT uses the 3' end of this newly synthesized short ssDNA to perform the RNA-dependent minus-strand DNA synthesis of the whole template. RNase H digests the RNA template except for a polypurine tract (PPT) situated at the 5' end of the genome. It is not clear if both polymerase and RNase H activities are simultaneous. RNase H probably can proceed both in a polymerase-dependent (RNA cut into small fragments by the same RT performing DNA synthesis) and a polymerase-independent mode (cleavage of remaining RNA fragments by free RTs). Secondly, RT performs DNA-directed plus-strand DNA synthesis using the PPT that has not been removed by RNase H as primers. PPT and tRNA primers are then removed by RNase H. The 3' and 5' ssDNA PBS regions hybridize to form a circular dsDNA intermediate. Strand displacement synthesis by RT to the PBS and PPT ends produces a blunt ended, linear dsDNA copy of the viral genome that includes long terminal repeats (LTRs) at both ends. Functionally, catalyzes viral DNA integration into the host chromosome, by performing a series of DNA cutting and joining reactions. This enzyme activity takes place after virion entry into a cell and reverse transcription of the RNA genome in dsDNA. The first step in the integration process is 3' processing. This step requires a complex comprising the viral genome, matrix protein and integrase. This complex is called the pre-integration complex (PIC). The integrase protein removes 2 nucleotides from each 3' end of the viral DNA, leaving recessed CA OH's at the 3' ends. In the second step that requires cell division, the PIC enters cell nucleus. In the third step, termed strand transfer, the integrase protein joins the previously processed 3' ends to the 5' ends of strands of target cellular DNA at the site of integration. The last step is viral DNA integration into host chromosome. This Homo sapiens (Human) protein is Gag-Pol polyprotein (gag-pol).